The sequence spans 161 residues: Lipoprotein signal peptidase (161 aa).

4 helical membrane passes run 8-28 (LKYF…KYLA), 40-60 (ITSF…SLLS), 67-87 (QMIM…YLII), and 91-111 (ITEK…LGNF). Residues D122 and D140 contribute to the active site. A helical transmembrane segment spans residues 136 to 156 (FNIADSAITCGVVILIAASLF).

Belongs to the peptidase A8 family.

The protein resides in the cell inner membrane. It catalyses the reaction Release of signal peptides from bacterial membrane prolipoproteins. Hydrolyzes -Xaa-Yaa-Zaa-|-(S,diacylglyceryl)Cys-, in which Xaa is hydrophobic (preferably Leu), and Yaa (Ala or Ser) and Zaa (Gly or Ala) have small, neutral side chains.. The protein operates within protein modification; lipoprotein biosynthesis (signal peptide cleavage). Functionally, this protein specifically catalyzes the removal of signal peptides from prolipoproteins. The protein is Lipoprotein signal peptidase of Francisella tularensis subsp. novicida (strain U112).